A 465-amino-acid polypeptide reads, in one-letter code: 3-isopropylmalate dehydratase large subunit (465 aa).

Residues Cys347, Cys407, and Cys410 each coordinate [4Fe-4S] cluster.

The protein belongs to the aconitase/IPM isomerase family. LeuC type 1 subfamily. In terms of assembly, heterodimer of LeuC and LeuD. [4Fe-4S] cluster is required as a cofactor.

It catalyses the reaction (2R,3S)-3-isopropylmalate = (2S)-2-isopropylmalate. It participates in amino-acid biosynthesis; L-leucine biosynthesis; L-leucine from 3-methyl-2-oxobutanoate: step 2/4. Its function is as follows. Catalyzes the isomerization between 2-isopropylmalate and 3-isopropylmalate, via the formation of 2-isopropylmaleate. The chain is 3-isopropylmalate dehydratase large subunit from Buchnera aphidicola subsp. Pemphigus spyrothecae.